Reading from the N-terminus, the 625-residue chain is Basic helix-loop-helix ARNT-like protein 1 (625 aa).

The interval 1–60 is disordered; that stretch reads MADQRMDISSTISDFMSPGPTDLLSSSLGTSGVDCNRKRKGSSTDYQESMDTDKDDPHGR. S17 carries the phosphoserine; by GSK3-beta modification. The span at 17-32 shows a compositional bias: low complexity; it reads SPGPTDLLSSSLGTSG. Residue T21 is modified to Phosphothreonine; by GSK3-beta. A Nuclear localization signal motif is present at residues 36-41; the sequence is NRKRKG. A compositionally biased stretch (basic and acidic residues) spans 51–60; the sequence is DTDKDDPHGR. A bHLH domain is found at 72 to 125; the sequence is NAREAHSQIEKRRRDKMNSFIDELASLVPTCNAMSRKLDKLTVLRMAVQHMKTL. S78 carries the post-translational modification Phosphoserine. S90 is subject to Phosphoserine; by CK2. Residues 142–152 carry the Nuclear export signal 1 motif; that stretch reads LSDDELKHLIL. Positions 143–215 constitute a PAS 1 domain; that stretch reads SDDELKHLIL…EQLSSSDTAP (73 aa). K252 is covalently cross-linked (Glycyl lysine isopeptide (Lys-Gly) (interchain with G-Cter in SUMO2 and SUMO3)). K259 is covalently cross-linked (Glycyl lysine isopeptide (Lys-Gly) (interchain with G-Cter in SUMO); alternate). K259 is covalently cross-linked (Glycyl lysine isopeptide (Lys-Gly) (interchain with G-Cter in SUMO2); alternate). Residues 325–395 enclose the PAS 2 domain; sequence PQPVNGEIRV…ECHRQVLQTR (71 aa). The Nuclear export signal 2 motif lies at 360–368; it reads LAYLPQELL. Residues 400 to 443 form the PAC domain; sequence TNCYKFKIKDGSFITLRSRWFSFMNPWTKEVEYIVSTNTVVLAN. Disordered regions lie at residues 454 to 491 and 510 to 594; these read QLTA…RAGA and GSSP…SPSN. Positions 507 to 587 are interaction with CIART; the sequence is RIRGSSPSSC…IGIDMIDNDQ (81 aa). The span at 510–520 shows a compositional bias: low complexity; sequence GSSPSSCGSSP. K537 carries the N6-acetyllysine modification.

As to quaternary structure, component of the circadian clock oscillator which includes the CRY1/2 proteins, CLOCK or NPAS2, BMAL1 or BMAL2, CSNK1D and/or CSNK1E, TIMELESS and the PER1/2/3 proteins. Forms a heterodimer with CLOCK. The CLOCK-BMAL1 heterodimer is required for E-box-dependent transactivation, for CLOCK nuclear translocation and degradation, and, for phosphorylation of both CLOCK and BMAL1. Part of a nuclear complex which also includes RACK1 and PRKCA; RACK1 and PRKCA are recruited to the complex in a circadian manner. Interacts with NPAS2. Interacts with EZH2. Interacts with SUMO3. Interacts with SIRT1. Interacts with AHR. Interacts with ID1, ID2 and ID3. Interacts with DDX4. Interacts with OGT. Interacts with EED and SUZ12. Interacts with MTA1. Interacts with CIART. Interacts with HSP90. Interacts with KAT2B and EP300. Interacts with BHLHE40/DEC1 and BHLHE41/DEC2. Interacts with RELB and the interaction is enhanced in the presence of CLOCK. Interacts with PER1, PER2, CRY1 and CRY2 and this interaction requires a translocation to the nucleus. Interaction of the CLOCK-BMAL1 heterodimer with PER or CRY inhibits transcription activation. Interaction of the CLOCK-BMAL1 with CRY1 is independent of DNA but with PER2 is off DNA. The CLOCK-BMAL1 heterodimer interacts with GSK3B. Interacts with KDM5A. Interacts with KMT2A; in a circadian manner. Interacts with UBE3A. Interacts with PRKCG. Interacts with MAGEL2. Interacts with NCOA2. Interacts with THRAP3. The CLOCK-BMAL1 heterodimer interacts with PASD1. Interacts with PASD1. Interacts with USP9X. Interacts with PIWIL2 (via PIWI domain). Interacts with HDAC3. Interacts with HNF4A. In terms of processing, ubiquitinated, leading to its proteasomal degradation. Deubiquitinated by USP9X. Post-translationally, O-glycosylated; contains O-GlcNAc. O-glycosylation by OGT prevents protein degradation by inhibiting ubiquitination. It also stabilizes the CLOCK-BMAL1 heterodimer thereby increasing CLOCK-BMAL1-mediated transcription of genes in the negative loop of the circadian clock such as PER1/2/3 and CRY1/2. Acetylated on Lys-537 by CLOCK during the repression phase of the circadian cycle. Acetylation facilitates recruitment of CRY1 protein and initiates the repression phase of the circadian cycle. Acetylated at Lys-537 by KAT5 during the activation phase of the cycle, leading to recruitment of the positive transcription elongation factor b (P-TEFb) and BRD4, followed by productive elongation of circadian transcripts. Deacetylated by SIRT1, which may result in decreased protein stability. In terms of processing, phosphorylated upon dimerization with CLOCK. Phosphorylation enhances the transcriptional activity, alters the subcellular localization and decreases the stability of the CLOCK-BMAL1 heterodimer by promoting its degradation. Phosphorylation shows circadian variations in the liver with a peak between CT10 to CT14. Phosphorylation at Ser-90 by CK2 is essential for its nuclear localization, its interaction with CLOCK and controls CLOCK nuclear entry. Dephosphorylation at Ser-78 is important for dimerization with CLOCK and transcriptional activity. Post-translationally, sumoylated on Lys-259 upon dimerization with CLOCK. Predominantly conjugated to poly-SUMO2/3 rather than SUMO1 and the level of these conjugates undergo rhythmic variation, peaking at CT9-CT12. Sumoylation localizes it exclusively to the PML body and promotes its ubiquitination in the PML body, ubiquitin-dependent proteasomal degradation and the transcriptional activity of the CLOCK-BMAL1 heterodimer. Undergoes lysosome-mediated degradation in a time-dependent manner in the liver.

The protein resides in the nucleus. Its subcellular location is the cytoplasm. The protein localises to the PML body. Its function is as follows. Transcriptional activator which forms a core component of the circadian clock. The circadian clock, an internal time-keeping system, regulates various physiological processes through the generation of approximately 24 hour circadian rhythms in gene expression, which are translated into rhythms in metabolism and behavior. It is derived from the Latin roots 'circa' (about) and 'diem' (day) and acts as an important regulator of a wide array of physiological functions including metabolism, sleep, body temperature, blood pressure, endocrine, immune, cardiovascular, and renal function. Consists of two major components: the central clock, residing in the suprachiasmatic nucleus (SCN) of the brain, and the peripheral clocks that are present in nearly every tissue and organ system. Both the central and peripheral clocks can be reset by environmental cues, also known as Zeitgebers (German for 'timegivers'). The predominant Zeitgeber for the central clock is light, which is sensed by retina and signals directly to the SCN. The central clock entrains the peripheral clocks through neuronal and hormonal signals, body temperature and feeding-related cues, aligning all clocks with the external light/dark cycle. Circadian rhythms allow an organism to achieve temporal homeostasis with its environment at the molecular level by regulating gene expression to create a peak of protein expression once every 24 hours to control when a particular physiological process is most active with respect to the solar day. Transcription and translation of core clock components (CLOCK, NPAS2, BMAL1, BMAL2, PER1, PER2, PER3, CRY1 and CRY2) plays a critical role in rhythm generation, whereas delays imposed by post-translational modifications (PTMs) are important for determining the period (tau) of the rhythms (tau refers to the period of a rhythm and is the length, in time, of one complete cycle). A diurnal rhythm is synchronized with the day/night cycle, while the ultradian and infradian rhythms have a period shorter and longer than 24 hours, respectively. Disruptions in the circadian rhythms contribute to the pathology of cardiovascular diseases, cancer, metabolic syndromes and aging. A transcription/translation feedback loop (TTFL) forms the core of the molecular circadian clock mechanism. Transcription factors, CLOCK or NPAS2 and BMAL1 or BMAL2, form the positive limb of the feedback loop, act in the form of a heterodimer and activate the transcription of core clock genes and clock-controlled genes (involved in key metabolic processes), harboring E-box elements (5'-CACGTG-3') within their promoters. The core clock genes: PER1/2/3 and CRY1/2 which are transcriptional repressors form the negative limb of the feedback loop and interact with the CLOCK|NPAS2-BMAL1|BMAL2 heterodimer inhibiting its activity and thereby negatively regulating their own expression. This heterodimer also activates nuclear receptors NR1D1/2 and RORA/B/G, which form a second feedback loop and which activate and repress BMAL1 transcription, respectively. BMAL1 positively regulates myogenesis and negatively regulates adipogenesis via the transcriptional control of the genes of the canonical Wnt signaling pathway. Plays a role in normal pancreatic beta-cell function; regulates glucose-stimulated insulin secretion via the regulation of antioxidant genes NFE2L2/NRF2 and its targets SESN2, PRDX3, CCLC and CCLM. Negatively regulates the mTORC1 signaling pathway; regulates the expression of MTOR and DEPTOR. Controls diurnal oscillations of Ly6C inflammatory monocytes; rhythmic recruitment of the PRC2 complex imparts diurnal variation to chemokine expression that is necessary to sustain Ly6C monocyte rhythms. Regulates the expression of HSD3B2, STAR, PTGS2, CYP11A1, CYP19A1 and LHCGR in the ovary and also the genes involved in hair growth. Plays an important role in adult hippocampal neurogenesis by regulating the timely entry of neural stem/progenitor cells (NSPCs) into the cell cycle and the number of cell divisions that take place prior to cell-cycle exit. Regulates the circadian expression of CIART and KLF11. The CLOCK-BMAL1 heterodimer regulates the circadian expression of SERPINE1/PAI1, VWF, B3, CCRN4L/NOC, NAMPT, DBP, MYOD1, PPARGC1A, PPARGC1B, SIRT1, GYS2, F7, NGFR, GNRHR, BHLHE40/DEC1, ATF4, MTA1, KLF10 and also genes implicated in glucose and lipid metabolism. Promotes rhythmic chromatin opening, regulating the DNA accessibility of other transcription factors. The NPAS2-BMAL1 heterodimer positively regulates the expression of MAOA, F7 and LDHA and modulates the circadian rhythm of daytime contrast sensitivity by regulating the rhythmic expression of adenylate cyclase type 1 (ADCY1) in the retina. The preferred binding motif for the CLOCK-BMAL1 heterodimer is 5'-CACGTGA-3', which contains a flanking adenine nucleotide at the 3-prime end of the canonical 6-nucleotide E-box sequence. CLOCK specifically binds to the half-site 5'-CAC-3', while BMAL1 binds to the half-site 5'-GTGA-3'. The CLOCK-BMAL1 heterodimer also recognizes the non-canonical E-box motifs 5'-AACGTGA-3' and 5'-CATGTGA-3'. Essential for the rhythmic interaction of CLOCK with ASS1 and plays a critical role in positively regulating CLOCK-mediated acetylation of ASS1. Plays a role in protecting against lethal sepsis by limiting the expression of immune checkpoint protein CD274 in macrophages in a PKM2-dependent manner. Regulates the diurnal rhythms of skeletal muscle metabolism via transcriptional activation of genes promoting triglyceride synthesis (DGAT2) and metabolic efficiency (COQ10B). In Pongo abelii (Sumatran orangutan), this protein is Basic helix-loop-helix ARNT-like protein 1 (BMAL1).